Consider the following 375-residue polypeptide: Kininogen (375 aa).

An N-terminal signal peptide occupies residues 1-23 (MKLGVRLCVLVVFSLQLWGPGQG). Cystatin kininogen-type domains follow at residues 35 to 139 (CDDK…VEAP) and 156 to 260 (VESE…GPLD). Asn-74 is a glycosylation site (N-linked (GlcNAc) asparagine). 4 cysteine pairs are disulfide-bonded: Cys-91–Cys-102, Cys-115–Cys-133, Cys-211–Cys-223, and Cys-234–Cys-254. The N-linked (GlcNAc) asparagine glycan is linked to Asn-235. A disordered region spans residues 283 to 375 (EVKTTQASTA…LSDLDLLGKK (93 aa)).

N-glycosylated, with sialylated biantennary complex-type glycans. In terms of processing, O-glycosylated, sialylated oligosaccharides. Post-translationally, bradykinin is released from kininogen by kallikrein. The N-terminus is blocked. Expressed in the skin, liver, intestine, spleen, pancreas and kidney.

It localises to the cytoplasm. Its subcellular location is the vacuole. Functionally, inhibits papain and ficin (cysteine proteinases) but not trypsin (a serine proteinase). This chain is Kininogen (LOC106584303), found in Salmo salar (Atlantic salmon).